The chain runs to 90 residues: U7-theraphotoxin-Hhn1a 4 (90 aa).

The first 19 residues, Met-1–Ser-19, serve as a signal peptide directing secretion. Positions Phe-20–Glu-50 are excised as a propeptide. 3 disulfide bridges follow: Cys-51-Cys-65, Cys-58-Cys-70, and Cys-64-Cys-81.

This sequence belongs to the neurotoxin 10 (Hwtx-1) family. 13 (Hntx-13) subfamily. Expressed by the venom gland.

The protein localises to the secreted. In terms of biological role, ion channel inhibitor. The polypeptide is U7-theraphotoxin-Hhn1a 4 (Cyriopagopus hainanus (Chinese bird spider)).